The following is a 252-amino-acid chain: Type III pantothenate kinase (252 aa).

6–13 serves as a coordination point for ATP; it reads DMGNTRLK. Residues Y93 and 100-103 contribute to the substrate site; that span reads GVDR. The Proton acceptor role is filled by D102. T126 is a binding site for ATP. Residue T179 participates in substrate binding.

The protein belongs to the type III pantothenate kinase family. Homodimer. It depends on NH4(+) as a cofactor. K(+) serves as cofactor.

It localises to the cytoplasm. The enzyme catalyses (R)-pantothenate + ATP = (R)-4'-phosphopantothenate + ADP + H(+). The protein operates within cofactor biosynthesis; coenzyme A biosynthesis; CoA from (R)-pantothenate: step 1/5. Its function is as follows. Catalyzes the phosphorylation of pantothenate (Pan), the first step in CoA biosynthesis. This is Type III pantothenate kinase from Cellvibrio japonicus (strain Ueda107) (Pseudomonas fluorescens subsp. cellulosa).